The sequence spans 980 residues: Putative helicase 087L (980 aa).

Residues 59–246 form the Helicase ATP-binding domain; the sequence is INPHTLYDGV…IDLFNLILRT (188 aa). 72 to 79 serves as a coordination point for ATP; the sequence is HEMGTGKT. The DEAH box signature appears at 189–192; it reads DEAH. The 158-residue stretch at 389–546 folds into the Helicase C-terminal domain; that stretch reads RLSFVFSEFV…SIDLHMYEIA (158 aa).

Belongs to the IIV-6 022L family. SNF2/RAD54 helicase subfamily.

This is Putative helicase 087L from Invertebrate iridescent virus 3 (IIV-3).